The sequence spans 1119 residues: DNA-directed RNA polymerase subunit beta (1119 aa).

Belongs to the RNA polymerase beta chain family. As to quaternary structure, the RNAP catalytic core consists of 2 alpha, 1 beta, 1 beta' and 1 omega subunit. When a sigma factor is associated with the core the holoenzyme is formed, which can initiate transcription.

It catalyses the reaction RNA(n) + a ribonucleoside 5'-triphosphate = RNA(n+1) + diphosphate. In terms of biological role, DNA-dependent RNA polymerase catalyzes the transcription of DNA into RNA using the four ribonucleoside triphosphates as substrates. The chain is DNA-directed RNA polymerase subunit beta from Thermus thermophilus (strain ATCC 27634 / DSM 579 / HB8).